The following is a 373-amino-acid chain: Zn(2)-C6 fungal-type transcription factor afumD (373 aa).

The disordered stretch occupies residues 1–48 (MLDRSKMTSAIPDSNSSSSPRGHNQSERDSYNRKKRKGPRLAHRKSRT). Residues 33-48 (RKKRKGPRLAHRKSRT) show a composition bias toward basic residues. A DNA-binding region (zn(2)-C6 fungal-type) is located at residues 50 to 77 (CQRCRARRVKCDESRPVCRDCHRHGIPC). Residues 86–110 (GAIPPSTGIQSRPLEPSPSDPSNDA) are disordered.

It localises to the nucleus. In terms of biological role, zn(2)-C6 fungal-type transcription factor; part of the gene cluster that mediates the biosynthesis fumihopaside A, a hopane-type glucoside that enhances the thermotolerance and UV resistance of N.fumigata. The chain is Zn(2)-C6 fungal-type transcription factor afumD from Aspergillus fumigatus (strain CBS 144.89 / FGSC A1163 / CEA10) (Neosartorya fumigata).